The chain runs to 477 residues: Bifunctional enzyme PyrF/PyrE (477 aa).

The segment at 1 to 273 (MIFFDKLHQN…ITVRDVASCS (273 aa)) is OMP decarboxylase. The active-site Proton donor is the Lys96. The segment at 274–477 (VWLPDVFTVK…DEQFLALTAE (204 aa)) is orotate phosphoribosyltransferase. 5-phospho-alpha-D-ribose 1-diphosphate is bound by residues Arg374, Lys375, Lys378, His380, and 400–408 (DDILISGKS).

This sequence in the N-terminal section; belongs to the OMP decarboxylase family. Type 2 subfamily. The protein in the C-terminal section; belongs to the purine/pyrimidine phosphoribosyltransferase family. The cofactor is Mg(2+).

The catalysed reaction is orotidine 5'-phosphate + H(+) = UMP + CO2. It carries out the reaction orotidine 5'-phosphate + diphosphate = orotate + 5-phospho-alpha-D-ribose 1-diphosphate. It functions in the pathway pyrimidine metabolism; UMP biosynthesis via de novo pathway; UMP from orotate: step 1/2. Its pathway is pyrimidine metabolism; UMP biosynthesis via de novo pathway; UMP from orotate: step 2/2. Catalyzes the transfer of a ribosyl phosphate group from 5-phosphoribose 1-diphosphate to orotate, leading to the formation of orotidine monophosphate (OMP). In terms of biological role, catalyzes the decarboxylation of orotidine monophosphate (OMP) to uridine monophosphate (UMP). The sequence is that of Bifunctional enzyme PyrF/PyrE (pyrFE) from Nostoc sp. (strain PCC 7120 / SAG 25.82 / UTEX 2576).